Here is a 282-residue protein sequence, read N- to C-terminus: UDP-3-O-acyl-N-acetylglucosamine deacetylase (282 aa).

Positions 80, 240, and 244 each coordinate Zn(2+). Histidine 267 acts as the Proton donor in catalysis.

It belongs to the LpxC family. Zn(2+) serves as cofactor.

It localises to the plastid. The protein resides in the chloroplast. It carries out the reaction a UDP-3-O-[(3R)-3-hydroxyacyl]-N-acetyl-alpha-D-glucosamine + H2O = a UDP-3-O-[(3R)-3-hydroxyacyl]-alpha-D-glucosamine + acetate. The protein operates within glycolipid biosynthesis; lipid IV(A) biosynthesis; lipid IV(A) from (3R)-3-hydroxytetradecanoyl-[acyl-carrier-protein] and UDP-N-acetyl-alpha-D-glucosamine: step 2/6. Its function is as follows. Catalyzes the hydrolysis of UDP-3-O-myristoyl-N-acetylglucosamine to form UDP-3-O-myristoylglucosamine and acetate. Involved in the biosynthesis of lipid A, a phosphorylated glycolipid that in bacteria anchors the lipopolysaccharide to the outer membrane of the cell. The target for the lipopolysaccharides produced in the chloroplast could either be the cell envelope of the eukaryote or the plastid membrane. In Cyanidium caldarium (Red alga), this protein is UDP-3-O-acyl-N-acetylglucosamine deacetylase.